Here is a 129-residue protein sequence, read N- to C-terminus: UPF0102 protein Clim_0016 (129 aa).

It belongs to the UPF0102 family.

This is UPF0102 protein Clim_0016 from Chlorobium limicola (strain DSM 245 / NBRC 103803 / 6330).